Reading from the N-terminus, the 919-residue chain is Transcriptional regulatory protein EDS1 (919 aa).

The disordered stretch occupies residues 1–54 (MSHHVPNLYGTPIRDPHERKRNSASMGEVNQSVSSRNCERGSEKGTKQRKKASR). The span at 23–36 (SASMGEVNQSVSSR) shows a compositional bias: polar residues. Over residues 37–46 (NCERGSEKGT) the composition is skewed to basic and acidic residues. The segment at residues 56-85 (CDQCRRKRIKCRFDKHTGVCQGCLEVGEKC) is a DNA-binding region (zn(2)-C6 fungal-type). The segment at 297–338 (AGCPNKKLGTDGRSDKWDKNSTWKPVYRSSNPSHPSTEKNVS) is disordered. The span at 304–317 (LGTDGRSDKWDKNS) shows a compositional bias: basic and acidic residues. A compositionally biased stretch (polar residues) spans 318-338 (TWKPVYRSSNPSHPSTEKNVS).

Binds DNA in a sequence-specific manner.

The protein resides in the nucleus. This chain is Transcriptional regulatory protein EDS1 (EDS1), found in Saccharomyces cerevisiae (strain RM11-1a) (Baker's yeast).